The primary structure comprises 580 residues: E3 ubiquitin-protein ligase TRIM45 (580 aa).

Residues 29-98 form an RING-type zinc finger; sequence CPTCLRLFKV…QIGILCPVCD (70 aa). 2 B box-type zinc fingers span residues 130-176 and 186-227; these read GQGL…MVDL and GKPI…YDFT. Cys135, Cys138, Cys158, His162, Cys191, His194, Cys214, and His219 together coordinate Zn(2+). A coiled-coil region spans residues 249 to 329; that stretch reads VEALEDALAQ…LLADMRTGVE (81 aa). The Filamin repeat unit spans residues 394-497; the sequence is TQEVDPAQCV…VQGSPFNVTV (104 aa).

It belongs to the TRIM/RBCC family.

The protein resides in the cytoplasm. It is found in the nucleus. The enzyme catalyses S-ubiquitinyl-[E2 ubiquitin-conjugating enzyme]-L-cysteine + [acceptor protein]-L-lysine = [E2 ubiquitin-conjugating enzyme]-L-cysteine + N(6)-ubiquitinyl-[acceptor protein]-L-lysine.. E3 ubiquitin-protein ligase that plays a role in the regulation of inflammatory response. Mechanistically, mediates the 'Lys-48'-linked polyubiquitination of TAB2, a regulatory protein of the kinase TAK1, leading to its degradation via the proteasomal pathway and inhibition of the TLR-mediated inflammatory immune response. May act as a transcriptional repressor in mitogen-activated protein kinase signaling pathway. This Mus musculus (Mouse) protein is E3 ubiquitin-protein ligase TRIM45 (Trim45).